A 515-amino-acid polypeptide reads, in one-letter code: Serine/threonine-protein kinase STE7 (515 aa).

The Protein kinase domain maps to 191-466; sequence LVQLGKIGAG…IHELLHHDLI (276 aa). ATP contacts are provided by residues 197-205 and Lys220; that span reads IGAGNSGTV. Catalysis depends on Asp331, which acts as the Proton acceptor. Ser359 is subject to Phosphoserine. Position 363 is a phosphothreonine (Thr363).

It belongs to the protein kinase superfamily. STE Ser/Thr protein kinase family. MAP kinase kinase subfamily.

The catalysed reaction is L-seryl-[protein] + ATP = O-phospho-L-seryl-[protein] + ADP + H(+). It catalyses the reaction L-threonyl-[protein] + ATP = O-phospho-L-threonyl-[protein] + ADP + H(+). The enzyme catalyses L-tyrosyl-[protein] + ATP = O-phospho-L-tyrosyl-[protein] + ADP + H(+). Its activity is regulated as follows. Phosphorylated at multiple sites in response to pheromone. Functionally, serine/threonine protein kinase required for cell-type-specific transcription and signal transduction in yeast. It is thought that it is phosphorylated by the ste11 protein kinase and that it can phosphorylate the FUS3 and or KSS1 kinases. This chain is Serine/threonine-protein kinase STE7 (STE7), found in Saccharomyces cerevisiae (strain ATCC 204508 / S288c) (Baker's yeast).